The chain runs to 99 residues: Nucleoid-associated protein Cj1642 (99 aa).

It belongs to the YbaB/EbfC family. In terms of assembly, homodimer.

It localises to the cytoplasm. Its subcellular location is the nucleoid. Binds to DNA and alters its conformation. May be involved in regulation of gene expression, nucleoid organization and DNA protection. This Campylobacter jejuni subsp. jejuni serotype O:2 (strain ATCC 700819 / NCTC 11168) protein is Nucleoid-associated protein Cj1642.